Consider the following 557-residue polypeptide: Copine-6 (557 aa).

C2 domains are found at residues 2–127 (SDPE…TKPL) and 134–263 (TAGK…MQWD). Ca(2+) contacts are provided by aspartate 167, aspartate 173, aspartate 229, aspartate 231, and aspartate 237. The segment at 244-303 (STFQEMQEGTANPGQEMQWDCINPKYRDKKKNYKSSGTVVLAQCTVEKVHTFLDYIMGGC) is linker region. One can recognise a VWFA domain in the interval 306–526 (SFTVAIDFTA…ALAKRVLAEV (221 aa)).

The protein belongs to the copine family. As to quaternary structure, interacts (via second C2 domain) with OS9 (via C-terminus); this interaction occurs in a calcium-dependent manner in vitro. May interact with NECAB1. It depends on Ca(2+) as a cofactor.

It localises to the cytoplasm. Its subcellular location is the cell membrane. The protein localises to the endosome. It is found in the cytoplasmic vesicle. The protein resides in the clathrin-coated vesicle. It localises to the perikaryon. Its subcellular location is the cell projection. The protein localises to the dendrite. In terms of biological role, calcium-dependent phospholipid-binding protein that plays a role in calcium-mediated intracellular processes. Binds phospholipid membranes in a calcium-dependent manner. Plays a role in dendrite formation by melanocytes. This Pongo abelii (Sumatran orangutan) protein is Copine-6.